The primary structure comprises 199 residues: MSSGNAKIGHRAPQFKATAVMPDGQFKDISLADYKGKYVVFFFYPLDFTFVCPTEIIAFSDRAEEFKKLNCQVIGASVDSHFCHLAWINTPKKQGGLGPMNIPLISDPKRTIAQDYGVLKADEGISFRGLFIIDDKGILRQITINDLPVGRSVDETLRLVQAFQFTDKHGEVCPAGWKPGSDTIKPDVQKSKEYFSKQK.

Ser-2 carries the post-translational modification N-acetylserine. Positions 6-165 constitute a Thioredoxin domain; that stretch reads AKIGHRAPQF…TLRLVQAFQF (160 aa). Lys-7 carries the post-translational modification N6-acetyllysine; alternate. A Glycyl lysine isopeptide (Lys-Gly) (interchain with G-Cter in SUMO2); alternate cross-link involves residue Lys-7. An N6-acetyllysine mark is found at Lys-16 and Lys-27. Residue Lys-35 is modified to N6-acetyllysine; alternate. An N6-succinyllysine; alternate modification is found at Lys-35. The Cysteine sulfenic acid (-SOH) intermediate role is filled by Cys-52. Thr-90 bears the Phosphothreonine mark. Lys-120 participates in a covalent cross-link: Glycyl lysine isopeptide (Lys-Gly) (interchain with G-Cter in SUMO2). Lys-136 is modified (N6-acetyllysine). The disordered stretch occupies residues 176–199; that stretch reads GWKPGSDTIKPDVQKSKEYFSKQK. Residues 184-199 are compositionally biased toward basic and acidic residues; the sequence is IKPDVQKSKEYFSKQK. Residue Lys-185 forms a Glycyl lysine isopeptide (Lys-Gly) (interchain with G-Cter in SUMO1) linkage. Lys-197 bears the N6-acetyllysine mark.

It belongs to the peroxiredoxin family. AhpC/Prx1 subfamily. Homodimer; disulfide-linked, upon oxidation. 5 homodimers assemble to form a ring-like decamer. Interacts with GDPD5; forms a mixed-disulfide with GDPD5. Interacts with SESN1 and SESN2. Interacts with FAM107A. In terms of processing, phosphorylated on Thr-90 during the M-phase, which leads to a decrease in enzymatic activity. Post-translationally, acetylation increases reducing activity and resistance to superoxidation. Deacetylated by HDAC6 which decreases reducing activity.

The protein localises to the cytoplasm. It carries out the reaction a hydroperoxide + [thioredoxin]-dithiol = an alcohol + [thioredoxin]-disulfide + H2O. In terms of biological role, thiol-specific peroxidase that catalyzes the reduction of hydrogen peroxide and organic hydroperoxides to water and alcohols, respectively. Plays a role in cell protection against oxidative stress by detoxifying peroxides and as sensor of hydrogen peroxide-mediated signaling events. Might participate in the signaling cascades of growth factors and tumor necrosis factor-alpha by regulating the intracellular concentrations of H(2)O(2). Reduces an intramolecular disulfide bond in GDPD5 that gates the ability to GDPD5 to drive postmitotic motor neuron differentiation. The chain is Peroxiredoxin-1 (PRDX1) from Bos taurus (Bovine).